A 632-amino-acid polypeptide reads, in one-letter code: Golgin subfamily A member 8O (632 aa).

The tract at residues 1 to 76 is disordered; the sequence is MAEETQHNKL…TSSATLKDLE (76 aa). Residues 38–50 show a composition bias toward polar residues; the sequence is TNGSIPETATSGG. Coiled coils occupy residues 85–150 and 209–421; these read VLDS…TDLY and ELEQ…SLMA. 3 disordered regions span residues 423 to 452, 505 to 524, and 552 to 612; these read PGEG…DPES, DAAL…DEGE, and NSAD…EHPG. Over residues 427 to 440 the composition is skewed to basic and acidic residues; the sequence is HGGEHLDSEGEEAP. The segment covering 508 to 520 has biased composition (gly residues); sequence LGGGHHQAGAQGG. A compositionally biased stretch (basic and acidic residues) spans 569 to 578; that stretch reads AADKHGDLRE.

It belongs to the GOLGA6 family.

This chain is Golgin subfamily A member 8O (GOLGA8O), found in Homo sapiens (Human).